We begin with the raw amino-acid sequence, 649 residues long: Endoplasmic reticulum chaperone BiP (649 aa).

The N-terminal stretch at 1–20 (MGLSTYVGTFLLCILTLSHC) is a signal peptide. ATP contacts are provided by residues 36–39 (GTTY), Lys-96, 226–228 (GGT), 292–299 (EKAKRTLS), and 363–366 (GSTR). The interval 125 to 279 (KPYMKVQVGS…KKKEGKDITK (155 aa)) is nucleotide-binding (NBD). The interval 399 to 499 (VQAGVISGVE…PRGLPQIEVT (101 aa)) is substrate-binding (SBD). A Prevents secretion from ER motif is present at residues 646 to 649 (KEEL).

It belongs to the heat shock protein 70 family.

It localises to the endoplasmic reticulum lumen. The catalysed reaction is ATP + H2O = ADP + phosphate + H(+). The chaperone activity is regulated by ATP-induced allosteric coupling of the nucleotide-binding (NBD) and substrate-binding (SBD) domains. In the ADP-bound and nucleotide-free (apo) states, the two domains have little interaction. In contrast, in the ATP-bound state the two domains are tightly coupled, which results in drastically accelerated kinetics in both binding and release of polypeptide substrates. J domain-containing co-chaperones stimulate the ATPase activity and are required for efficient substrate recognition. In terms of biological role, endoplasmic reticulum chaperone that plays a key role in protein folding and quality control in the endoplasmic reticulum lumen. Involved in the correct folding of proteins and degradation of misfolded proteins. Acts as a key repressor of the unfolded protein response (UPR). The sequence is that of Endoplasmic reticulum chaperone BiP from Echinococcus multilocularis (Fox tapeworm).